The following is a 300-amino-acid chain: NAD kinase (300 aa).

Aspartate 77 (proton acceptor) is an active-site residue. NAD(+)-binding positions include 77–78, 151–152, histidine 162, arginine 179, aspartate 181, and 192–197; these read DG, ND, and TAYSLS.

Belongs to the NAD kinase family. A divalent metal cation is required as a cofactor.

The protein resides in the cytoplasm. It carries out the reaction NAD(+) + ATP = ADP + NADP(+) + H(+). Its function is as follows. Involved in the regulation of the intracellular balance of NAD and NADP, and is a key enzyme in the biosynthesis of NADP. Catalyzes specifically the phosphorylation on 2'-hydroxyl of the adenosine moiety of NAD to yield NADP. This Cellvibrio japonicus (strain Ueda107) (Pseudomonas fluorescens subsp. cellulosa) protein is NAD kinase.